A 449-amino-acid chain; its full sequence is Tubulin beta-4 chain (449 aa).

Residues 1 to 4 carry the MREI motif motif; that stretch reads MREI. The GTP site is built by Gln-11, Glu-69, Ser-138, Gly-142, Thr-143, Gly-144, Asn-204, and Asn-226. Glu-69 lines the Mg(2+) pocket. The tract at residues 421-449 is disordered; sequence EYQQYQDATAEEEGEMYEDDEEESEQGAK. A compositionally biased stretch (acidic residues) spans 429–449; that stretch reads TAEEEGEMYEDDEEESEQGAK. Glu-438 bears the 5-glutamyl polyglutamate mark. Ser-444 is subject to Phosphoserine.

The protein belongs to the tubulin family. In terms of assembly, dimer of alpha and beta chains. A typical microtubule is a hollow water-filled tube with an outer diameter of 25 nm and an inner diameter of 15 nM. Alpha-beta heterodimers associate head-to-tail to form protofilaments running lengthwise along the microtubule wall with the beta-tubulin subunit facing the microtubule plus end conferring a structural polarity. Microtubules usually have 13 protofilaments but different protofilament numbers can be found in some organisms and specialized cells. Requires Mg(2+) as cofactor. Some glutamate residues at the C-terminus are polyglycylated, resulting in polyglycine chains on the gamma-carboxyl group. Glycylation is mainly limited to tubulin incorporated into axonemes (cilia and flagella) whereas glutamylation is prevalent in neuronal cells, centrioles, axonemes, and the mitotic spindle. Both modifications can coexist on the same protein on adjacent residues, and lowering polyglycylation levels increases polyglutamylation, and reciprocally. The precise function of polyglycylation is still unclear. Post-translationally, some glutamate residues at the C-terminus are polyglutamylated, resulting in polyglutamate chains on the gamma-carboxyl group. Polyglutamylation plays a key role in microtubule severing by spastin (SPAST). SPAST preferentially recognizes and acts on microtubules decorated with short polyglutamate tails: severing activity by SPAST increases as the number of glutamates per tubulin rises from one to eight, but decreases beyond this glutamylation threshold. Neuron specific.

The protein resides in the cytoplasm. Its subcellular location is the cytoskeleton. Its function is as follows. Tubulin is the major constituent of microtubules, a cylinder consisting of laterally associated linear protofilaments composed of alpha- and beta-tubulin heterodimers. Microtubules grow by the addition of GTP-tubulin dimers to the microtubule end, where a stabilizing cap forms. Below the cap, tubulin dimers are in GDP-bound state, owing to GTPase activity of alpha-tubulin. The protein is Tubulin beta-4 chain of Gallus gallus (Chicken).